A 61-amino-acid polypeptide reads, in one-letter code: Metallothionein-1F (61 aa).

N-acetylmethionine is present on Met-1. Residues 1-29 form a beta region; the sequence is MDPNCSCPTGGSCTCAGSCTCKACRCTSC. A divalent metal cation contacts are provided by Cys-5, Cys-7, Cys-13, Cys-15, Cys-19, Cys-21, Cys-24, Cys-26, Cys-29, Cys-33, Cys-34, Cys-36, Cys-37, Cys-41, Cys-44, Cys-48, Cys-50, and Cys-57. The tract at residues 30–61 is alpha; sequence KKSCCSCCPAGCAKCAQGCICKGASDKCSCCA. Ser-58 bears the Phosphoserine mark. A divalent metal cation is bound by residues Cys-59 and Cys-60.

The protein belongs to the metallothionein superfamily. Type 1 family. As to quaternary structure, monomer.

Its function is as follows. Metallothioneins have a high content of cysteine residues that bind various heavy metals; these proteins are transcriptionally regulated by both heavy metals and glucocorticoids. The protein is Metallothionein-1F (MT1F) of Sus scrofa (Pig).